Reading from the N-terminus, the 116-residue chain is Histone H2B (116 aa).

Residues Thr1–Lys11 show a composition bias toward basic residues. The interval Thr1 to Lys25 is disordered. Residues Lys4, Lys11, and Lys14 each carry the N6-acetyllysine modification. An O-linked (GlcNAc) serine glycan is attached at Ser103. Lys111 is covalently cross-linked (Glycyl lysine isopeptide (Lys-Gly) (interchain with G-Cter in ubiquitin)).

The nucleosome is a histone octamer containing two molecules each of H2A, H2B, H3 and H4 assembled in one H3-H4 heterotetramer and two H2A-H2B heterodimers. The octamer wraps approximately 147 bp of DNA. Monoubiquitination gives a specific tag for epigenetic transcriptional activation and is also prerequisite for histone H3 'Lys-4' and 'Lys-79' methylation. Post-translationally, glcNAcylation at Ser-103 promotes monoubiquitination of Lys-111. It fluctuates in response to extracellular glucose, and associates with transcribed genes.

It is found in the nucleus. Its subcellular location is the chromosome. Its function is as follows. Core component of nucleosome. Nucleosomes wrap and compact DNA into chromatin, limiting DNA accessibility to the cellular machineries which require DNA as a template. Histones thereby play a central role in transcription regulation, DNA repair, DNA replication and chromosomal stability. DNA accessibility is regulated via a complex set of post-translational modifications of histones, also called histone code, and nucleosome remodeling. Functionally, a mixture of histones H2B and H4 has antimicrobial activity against the Gram-positive bacterium M.luteus. The chain is Histone H2B from Penaeus vannamei (Whiteleg shrimp).